Reading from the N-terminus, the 159-residue chain is NADH-quinone oxidoreductase subunit B (159 aa).

Residues C36, C37, C102, and C132 each contribute to the [4Fe-4S] cluster site.

Belongs to the complex I 20 kDa subunit family. NDH-1 is composed of 14 different subunits. Subunits NuoB, C, D, E, F, and G constitute the peripheral sector of the complex. The cofactor is [4Fe-4S] cluster.

The protein resides in the cell inner membrane. The catalysed reaction is a quinone + NADH + 5 H(+)(in) = a quinol + NAD(+) + 4 H(+)(out). In terms of biological role, NDH-1 shuttles electrons from NADH, via FMN and iron-sulfur (Fe-S) centers, to quinones in the respiratory chain. Couples the redox reaction to proton translocation (for every two electrons transferred, four hydrogen ions are translocated across the cytoplasmic membrane), and thus conserves the redox energy in a proton gradient. This is NADH-quinone oxidoreductase subunit B from Delftia acidovorans (strain DSM 14801 / SPH-1).